Here is a 225-residue protein sequence, read N- to C-terminus: MLYSSLPVCFLVLGAALCAPERMQNEAEPHDLQPHEAEPHSDHVAPLAKRSPHYDFGLGKRAYSYVSEYKRLPVYNFGLGKRSRPYSFGLGKRSVDEDQSNDEQQLTTSDLDQAALAELFDQYDDAEKRARPYSFGLGKRFADDETSEEKRARAYDFGLGKRLPMYNFGLGKRARSYNFGLGKRYSKFNFGLGKRERDMHRFSFGLGKRSGDDVSADDSDNYFDV.

Positions 1–18 (MLYSSLPVCFLVLGAALC) are cleaved as a signal peptide. Residues 19–48 (APERMQNEAEPHDLQPHEAEPHSDHVAPLA) constitute a propeptide that is removed on maturation. Leu58, Leu79, and Leu90 each carry leucine amide. The propeptide occupies 94-127 (SVDEDQSNDEQQLTTSDLDQAALAELFDQYDDAE). The residue at position 137 (Leu137) is a Leucine amide. A propeptide spanning residues 141–149 (FADDETSEE) is cleaved from the precursor. Leu159, Leu170, Leu181, Leu192, and Leu206 each carry leucine amide. The segment at 205–225 (GLGKRSGDDVSADDSDNYFDV) is disordered. Residues 210 to 225 (SGDDVSADDSDNYFDV) constitute a propeptide that is removed on maturation. Residues 214 to 225 (VSADDSDNYFDV) show a composition bias toward acidic residues.

Belongs to the allatostatin family. Highly expressed in the CNS and gut of larvae. Also expressed in the cells of the larval brain and ventral nerve cord and in endocrine cells of the midgut.

The protein resides in the secreted. In terms of biological role, may act as a neurotransmitter or neuromodulator. The chain is Helicostatins from Helicoverpa armigera (Cotton bollworm).